The following is a 238-amino-acid chain: Ribonuclease PH (238 aa).

Phosphate is bound by residues Arg86 and 124-126 (GTR).

Belongs to the RNase PH family. Homohexameric ring arranged as a trimer of dimers.

It catalyses the reaction tRNA(n+1) + phosphate = tRNA(n) + a ribonucleoside 5'-diphosphate. In terms of biological role, phosphorolytic 3'-5' exoribonuclease that plays an important role in tRNA 3'-end maturation. Removes nucleotide residues following the 3'-CCA terminus of tRNAs; can also add nucleotides to the ends of RNA molecules by using nucleoside diphosphates as substrates, but this may not be physiologically important. Probably plays a role in initiation of 16S rRNA degradation (leading to ribosome degradation) during starvation. In Rhizobium rhizogenes (strain K84 / ATCC BAA-868) (Agrobacterium radiobacter), this protein is Ribonuclease PH.